The following is a 247-amino-acid chain: Phycocyanobilin:ferredoxin oxidoreductase (247 aa).

Belongs to the HY2 family.

The enzyme catalyses (2R,3Z)-phycocyanobilin + 4 oxidized [2Fe-2S]-[ferredoxin] = biliverdin IXalpha + 4 reduced [2Fe-2S]-[ferredoxin] + 4 H(+). In terms of biological role, catalyzes the four-electron reduction of biliverdin IX-alpha (2-electron reduction at both the A and D rings); the reaction proceeds via an isolatable 2-electron intermediate, 181,182-dihydrobiliverdin. The chain is Phycocyanobilin:ferredoxin oxidoreductase (pcyA) from Prochlorococcus marinus (strain SARG / CCMP1375 / SS120).